Consider the following 151-residue polypeptide: Large ribosomal subunit protein bL9 (151 aa).

The protein belongs to the bacterial ribosomal protein bL9 family.

Binds to the 23S rRNA. The chain is Large ribosomal subunit protein bL9 from Francisella tularensis subsp. holarctica (strain LVS).